The chain runs to 1201 residues: Period circadian protein homolog 3 (1201 aa).

The disordered stretch occupies residues 1–50 (MPRGEAPGPGRRGAKDEALGEESGERWSPEFHLQRKLADSSHSEQQDRNR). Positions 13–50 (GAKDEALGEESGERWSPEFHLQRKLADSSHSEQQDRNR) are enriched in basic and acidic residues. Positions 55-64 (LIMVVQEMKK) match the Nuclear export signal 1 motif. 2 PAS domains span residues 121-188 (IASE…RAQL) and 262-328 (YEAP…KVLK). The PAC domain occupies 337-380 (HSPIRFCTQNGDYIILDSSWSSFVNPWSRKISFIIGRHKVRTSP). The short motif at 403-412 (LQEQIYKLLL) is the Nuclear export signal 3 element. Residues 555–760 (LKRKCISCTN…SSSNTGSGPR (206 aa)) form a CSNK1E binding domain region. 2 disordered regions span residues 717–788 (YSYF…FPPA) and 881–923 (PSMS…RSSS). A compositionally biased stretch (polar residues) spans 721–731 (QGDSTSKQTRS). A Nuclear localization signal motif is present at residues 729-745 (TRSAGCRKGKHKRKKLP). The segment covering 733-743 (GCRKGKHKRKK) has biased composition (basic residues). Composition is skewed to low complexity over residues 767–783 (AQPC…TSSP) and 881–890 (PSMSSAMSPT). The span at 900-911 (QRREEEKWEAQS) shows a compositional bias: basic and acidic residues. At Ser-919 the chain carries Phosphoserine. A Nuclear export signal 2 motif is present at residues 925–932 (LQLNLLQE). A disordered region spans residues 952–1067 (TEYCVTGNNG…GSAASGSSDS (116 aa)). 4 stretches are compositionally biased toward polar residues: residues 957 to 976 (TGNN…STGS), 983 to 994 (SHPTASALSTGS), 1001 to 1012 (SHPTASALSTGS), and 1035 to 1050 (TPSH…GSPP). 5 tandem repeats follow at residues 965 to 982 (SPAT…RENP), 983 to 1000 (SHPT…MKNP), 1001 to 1018 (SHPT…MKNP), 1019 to 1036 (SHPT…SRTP), and 1037 to 1054 (SHPT…SESP). Residues 965–1054 (SPATTGALST…STGSPPSESP (90 aa)) form a 5 X 18 AA tandem repeats of S-[HP]-[AP]-T-[AT]-[GST]-[ATV]-L-S-[MT]-G-[LS]-P-P-[MRS]-[EKR]-[NST]-P region. Residue Ser-994 is modified to Phosphoserine. Residue Ser-1053 is modified to Phosphoserine. Residues 1053–1067 (SPSRTGSAASGSSDS) show a composition bias toward low complexity. Residues 1123-1201 (ERVKEVVLKE…CGQVLVEDSC (79 aa)) are CRY binding domain.

Homodimer. Component of the circadian core oscillator, which includes the CRY proteins, CLOCK or NPAS2, BMAL1 or BMAL2, CSNK1D and/or CSNK1E, TIMELESS and the PER proteins. Interacts directly with PER1, PER2, CRY1, CRY2, and TIMELESS; interaction with CRY1 and CRY2 is weak and not rhythmic. Interacts with FBXW11 and BTRC. In terms of processing, phosphorylation by CSNK1E is weak and appears to require association with PER1 and translocation to the nucleus. Post-translationally, ubiquitinated.

The protein localises to the cytoplasm. It is found in the nucleus. In terms of biological role, originally described as a core component of the circadian clock. The circadian clock, an internal time-keeping system, regulates various physiological processes through the generation of approximately 24 hour circadian rhythms in gene expression, which are translated into rhythms in metabolism and behavior. It is derived from the Latin roots 'circa' (about) and 'diem' (day) and acts as an important regulator of a wide array of physiological functions including metabolism, sleep, body temperature, blood pressure, endocrine, immune, cardiovascular, and renal function. Consists of two major components: the central clock, residing in the suprachiasmatic nucleus (SCN) of the brain, and the peripheral clocks that are present in nearly every tissue and organ system. Both the central and peripheral clocks can be reset by environmental cues, also known as Zeitgebers (German for 'timegivers'). The predominant Zeitgeber for the central clock is light, which is sensed by retina and signals directly to the SCN. The central clock entrains the peripheral clocks through neuronal and hormonal signals, body temperature and feeding-related cues, aligning all clocks with the external light/dark cycle. Circadian rhythms allow an organism to achieve temporal homeostasis with its environment at the molecular level by regulating gene expression to create a peak of protein expression once every 24 hours to control when a particular physiological process is most active with respect to the solar day. Transcription and translation of core clock components (CLOCK, NPAS2, BMAL1, BMAL2, PER1, PER2, PER3, CRY1 and CRY2) plays a critical role in rhythm generation, whereas delays imposed by post-translational modifications (PTMs) are important for determining the period (tau) of the rhythms (tau refers to the period of a rhythm and is the length, in time, of one complete cycle). A diurnal rhythm is synchronized with the day/night cycle, while the ultradian and infradian rhythms have a period shorter and longer than 24 hours, respectively. Disruptions in the circadian rhythms contribute to the pathology of cardiovascular diseases, cancer, metabolic syndromes and aging. A transcription/translation feedback loop (TTFL) forms the core of the molecular circadian clock mechanism. Transcription factors, CLOCK or NPAS2 and BMAL1 or BMAL2, form the positive limb of the feedback loop, act in the form of a heterodimer and activate the transcription of core clock genes and clock-controlled genes (involved in key metabolic processes), harboring E-box elements (5'-CACGTG-3') within their promoters. The core clock genes: PER1/2/3 and CRY1/2 which are transcriptional repressors form the negative limb of the feedback loop and interact with the CLOCK|NPAS2-BMAL1|BMAL2 heterodimer inhibiting its activity and thereby negatively regulating their own expression. This heterodimer also activates nuclear receptors NR1D1, NR1D2, RORA, RORB and RORG, which form a second feedback loop and which activate and repress BMAL1 transcription, respectively. Has a redundant role with the other PER proteins PER1 and PER2 and is not essential for the circadian rhythms maintenance. In contrast, plays an important role in sleep-wake timing and sleep homeostasis probably through the transcriptional regulation of sleep homeostasis-related genes, without influencing circadian parameters. Can bind heme. The protein is Period circadian protein homolog 3 (PER3) of Homo sapiens (Human).